A 940-amino-acid polypeptide reads, in one-letter code: MPQDKIVIHGAREHNLKNIDVEIPRDKLVVVTGVSGSGKSSLAFETLYAEGQRRYVESLSAYARQFLGNMDKPDVDSIDGLSPAISIDQKTTSKNPRSTVGTVTEINDYLRLLYARVGTPYCVNGHGKISAQSVEEIVEQILELPEKTRLQILAPVVRTKKGTHVKMFERIQKDGYVRVRVDGEVYDISEVPELDKNKKHNIEIVIDRIVVKEGIRSRLFDSVEAALHQAEGYVIVDKMDGSELLFSEFYACPVCGFTVPELEPRLFSFNAPFGSCPDCDGLGVKLEPDVDLLIPDTSKTLREGAIIYWYGKASTYYPALLEQAMEQFGIDLDRPWEKLSEKEQQIVLYGNGDKLFHFLHEGDFGLRDQDMTFVGVIPNLWRRYRSGMSESAREMARSYMTELTCTTCHGYRLNDQALSVKVGEKNIAEFSILSIGDTLDYVKSLVLSANNEIIAKPILKEIKDRLTFLKNVGLDYLTLSRSSGTLSGGESQRIRLATQIGSNLSGVLYILDEPSIGLHQRDNDRLIESLQKMRDLGNTLIVVEHDEDTMMAADWLIDVGPGAGDLGGEIIASGTPKQVMKNKKSLTGQYLSGKRAIPVPEKRRAIDKKKMVKITGASENNLQNLDVEFPMGVMTAVTGVSGSGKSTLVNSILKKSLAQKLNHNSEKPGKHKKITGYEGIERLIDIDQSPIGRTPRSNPATYTSVFDDIRDLFANTNEAKIRGYKKGRFSFNVKGGRCEACSGDGIIKIEMHFLPDVYVPCEVCHGRRYNSETLEVHYKGKNISEVLDMRVSDGLEFFRHIPKIERKLQTIVDVGLGYVTLGQSATTLSGGEAQRMKLASELQKRSNGKAFYILDEPTTGLHSEDIATLIQVLDRLVEQGNTIVVIEHNLDVIKTADYIIDLGPEGGAGGGTILAKGRPEEVAKVADSYTGQYLKAKLEK.

Gly-33 to Ser-40 contributes to the ATP binding site. The segment at Cys-252–Cys-279 adopts a C4-type zinc-finger fold. 2 ABC transporter domains span residues Trp-309 to Leu-586 and Ile-606 to Lys-935. An ATP-binding site is contributed by Gly-639–Ser-646. Residues Cys-738–Cys-764 form a C4-type zinc finger.

This sequence belongs to the ABC transporter superfamily. UvrA family. Forms a heterotetramer with UvrB during the search for lesions.

The protein localises to the cytoplasm. The UvrABC repair system catalyzes the recognition and processing of DNA lesions. UvrA is an ATPase and a DNA-binding protein. A damage recognition complex composed of 2 UvrA and 2 UvrB subunits scans DNA for abnormalities. When the presence of a lesion has been verified by UvrB, the UvrA molecules dissociate. This chain is UvrABC system protein A, found in Lactococcus lactis subsp. lactis (strain IL1403) (Streptococcus lactis).